Consider the following 213-residue polypeptide: Uracil phosphoribosyltransferase (213 aa).

Residues Arg-77, Arg-102, and 129 to 137 (DPMLATGGS) contribute to the 5-phospho-alpha-D-ribose 1-diphosphate site. Residues Ile-198 and 203-205 (GDA) contribute to the uracil site. Residue Asp-204 participates in 5-phospho-alpha-D-ribose 1-diphosphate binding.

Belongs to the UPRTase family. Requires Mg(2+) as cofactor.

The enzyme catalyses UMP + diphosphate = 5-phospho-alpha-D-ribose 1-diphosphate + uracil. It functions in the pathway pyrimidine metabolism; UMP biosynthesis via salvage pathway; UMP from uracil: step 1/1. Allosterically activated by GTP. Its function is as follows. Catalyzes the conversion of uracil and 5-phospho-alpha-D-ribose 1-diphosphate (PRPP) to UMP and diphosphate. The polypeptide is Uracil phosphoribosyltransferase (Mycobacteroides abscessus (strain ATCC 19977 / DSM 44196 / CCUG 20993 / CIP 104536 / JCM 13569 / NCTC 13031 / TMC 1543 / L948) (Mycobacterium abscessus)).